A 482-amino-acid polypeptide reads, in one-letter code: MFS-type transporter traF (482 aa).

Positions 1 to 14 (MTSGTEQATLNTEE) are enriched in polar residues. A disordered region spans residues 1-22 (MTSGTEQATLNTEENGSDSDHL). 2 N-linked (GlcNAc...) asparagine glycosylation sites follow: N15 and N45. Helical transmembrane passes span 52 to 72 (VFITACLASLVCISTFGSSVM), 89 to 109 (LSILATALYVLGFAVGPLLFG), 125 to 145 (VFLFAIFSIPIAVAKNVATIF), 149 to 169 (FLCGTFAAAPLAIAGGGLADL), 176 to 196 (GIAVAGFASATFLGPVLGPLV), 209 to 229 (WTQWLSIIFSLVFLAIYFVFC), 275 to 295 (PILALLTLYMGFIYGFLYLCF), 312 to 332 (IGSLPFLSITVGVLIGVVIII), and 354 to 374 (LVPMMIGSILMPAGIFWFAWT). N376 carries an N-linked (GlcNAc...) asparagine glycan. A run of 3 helical transmembrane segments spans residues 379-399 (LPWAPQVVSGVFIGCGILLIF), 427-447 (LLGAGFPLFASYMFDNLGVPW), and 448-468 (AMSLLGFLCVALVPVPFLFFI).

Belongs to the major facilitator superfamily. CAR1 family.

It is found in the membrane. MFS-type transporter; part of the tra gene cluster that produces terrestric acid. The clavatol biosynthesis cluster cla and the terrestric acid cluster tra are both involved in the production of peniphenones and penilactones. In Penicillium crustosum (Blue mold fungus), this protein is MFS-type transporter traF.